The chain runs to 397 residues: MKILRLQDLIAAGQVAGQRVFIRADLNVPQDDAGHITEDTRIRASIPCIEMALKAGAAVMVTSHLGRPTEGEFKPEDSLAPVAARMGELMGREIPVIANWTDGVEVAPGQLVMLENCRLNKGEKKNNEALAQKMAALCDIFVHDAFGTAHRAEASTYGIAQFAKIACAGPLLAAEIDAISLALANPKRPLVAIVAGSKVSTKLTILKALSANVDGLIVGGGIANTFLLAAGLSIGKSLAEPDLVGEARAVIDAMKARGAAVPIPVDVVCAKTFSPTAEATVKAATDVADDDLILDIGPQTAAILAAQLKAAGTIVWNGPVGVFEFDAFAHGTETLARAIAESDAFSIAGGGDTLAAIAKYGIEKDVGYISTGGGAFLEVLEGKTLPAFEILTKRAAG.

Substrate contacts are provided by residues 25–27, R41, 64–67, R118, and R151; these read DLN and HLGR. ATP-binding positions include K202, E324, and 350–353; that span reads GGDT.

Belongs to the phosphoglycerate kinase family. As to quaternary structure, monomer.

Its subcellular location is the cytoplasm. It carries out the reaction (2R)-3-phosphoglycerate + ATP = (2R)-3-phospho-glyceroyl phosphate + ADP. The protein operates within carbohydrate degradation; glycolysis; pyruvate from D-glyceraldehyde 3-phosphate: step 2/5. The sequence is that of Phosphoglycerate kinase from Leptothrix cholodnii (strain ATCC 51168 / LMG 8142 / SP-6) (Leptothrix discophora (strain SP-6)).